Consider the following 371-residue polypeptide: Leucine-rich repeat-containing protein 58 (371 aa).

Serine 24 carries the phosphoserine modification. 9 LRR repeats span residues 45-66 (ALLR…LGSG), 69-91 (HLQL…LALR), 92-113 (GLRT…PKGL), 121-143 (SLQV…LELR), 144-166 (ALQT…ENLQ), 167-189 (SLEC…GNLP), 190-211 (SLNY…LSQL), 213-234 (SLRS…ILNL), and 236-256 (HLEE…RDLT). Positions 340-351 (SSASHSSTSQSE) are enriched in low complexity. The segment at 340-361 (SSASHSSTSQSESDSEDEASVA) is disordered.

The protein is Leucine-rich repeat-containing protein 58 (LRRC58) of Homo sapiens (Human).